The following is a 403-amino-acid chain: D-alanyl-D-alanine carboxypeptidase DacA (403 aa).

Positions 1-29 (MNTIFSARIMKRLALTTALCTAFISAAHA) are cleaved as a signal peptide. The active-site Acyl-ester intermediate is the serine 73. Lysine 76 functions as the Proton acceptor in the catalytic mechanism. Serine 139 is a catalytic residue. Lysine 242 is a substrate binding site.

It belongs to the peptidase S11 family.

Its subcellular location is the cell inner membrane. It catalyses the reaction Preferential cleavage: (Ac)2-L-Lys-D-Ala-|-D-Ala. Also transpeptidation of peptidyl-alanyl moieties that are N-acyl substituents of D-alanine.. Its pathway is cell wall biogenesis; peptidoglycan biosynthesis. Its function is as follows. Removes C-terminal D-alanyl residues from sugar-peptide cell wall precursors. This is D-alanyl-D-alanine carboxypeptidase DacA (dacA) from Escherichia coli O157:H7.